Consider the following 536-residue polypeptide: Glucan 1,6-alpha-glucosidase (536 aa).

Aspartate 194 (nucleophile) is an active-site residue. Catalysis depends on glutamate 236, which acts as the Proton donor.

It belongs to the glycosyl hydrolase 13 family.

It is found in the cytoplasm. The enzyme catalyses Hydrolysis of (1-&gt;6)-alpha-D-glucosidic linkages in (1-&gt;6)-alpha-D-glucans and derived oligosaccharides.. Functionally, the physiological substrates may be short isomaltosaccharides. The chain is Glucan 1,6-alpha-glucosidase (dexB) from Streptococcus mutans serotype c (strain ATCC 700610 / UA159).